The chain runs to 177 residues: Large ribosomal subunit protein uL6 (177 aa).

The protein belongs to the universal ribosomal protein uL6 family. Part of the 50S ribosomal subunit.

Its function is as follows. This protein binds to the 23S rRNA, and is important in its secondary structure. It is located near the subunit interface in the base of the L7/L12 stalk, and near the tRNA binding site of the peptidyltransferase center. In Halorhodospira halophila (strain DSM 244 / SL1) (Ectothiorhodospira halophila (strain DSM 244 / SL1)), this protein is Large ribosomal subunit protein uL6.